The sequence spans 469 residues: Tubulin gamma chain (469 aa).

142–148 contacts GTP; it reads AGGTGSG.

The protein belongs to the tubulin family.

The protein localises to the cytoplasm. Its subcellular location is the cytoskeleton. It localises to the microtubule organizing center. It is found in the spindle pole body. In terms of biological role, tubulin is the major constituent of microtubules. The gamma chain is found at microtubule organizing centers (MTOC) such as the spindle poles or the centrosome, suggesting that it is involved in the minus-end nucleation of microtubule assembly. The sequence is that of Tubulin gamma chain (TUB4) from Microbotryum violaceum (Anther smut fungus).